Here is a 72-residue protein sequence, read N- to C-terminus: Translation initiation factor IF-1 (72 aa).

An S1-like domain is found at 1–72; it reads MAKEDVIEVE…NRGRIIYRFK (72 aa).

Belongs to the IF-1 family. In terms of assembly, component of the 30S ribosomal translation pre-initiation complex which assembles on the 30S ribosome in the order IF-2 and IF-3, IF-1 and N-formylmethionyl-tRNA(fMet); mRNA recruitment can occur at any time during PIC assembly.

It localises to the cytoplasm. One of the essential components for the initiation of protein synthesis. Stabilizes the binding of IF-2 and IF-3 on the 30S subunit to which N-formylmethionyl-tRNA(fMet) subsequently binds. Helps modulate mRNA selection, yielding the 30S pre-initiation complex (PIC). Upon addition of the 50S ribosomal subunit IF-1, IF-2 and IF-3 are released leaving the mature 70S translation initiation complex. The chain is Translation initiation factor IF-1 from Syntrophomonas wolfei subsp. wolfei (strain DSM 2245B / Goettingen).